Reading from the N-terminus, the 165-residue chain is Thiol peroxidase (165 aa).

Residues 17 to 165 (PQVGEIVENF…NYEAALAVLA (149 aa)) form the Thioredoxin domain. Residue Cys59 is the Cysteine sulfenic acid (-SOH) intermediate of the active site. Cys59 and Cys93 are joined by a disulfide.

Belongs to the peroxiredoxin family. Tpx subfamily. In terms of assembly, homodimer.

The catalysed reaction is a hydroperoxide + [thioredoxin]-dithiol = an alcohol + [thioredoxin]-disulfide + H2O. In terms of biological role, thiol-specific peroxidase that catalyzes the reduction of hydrogen peroxide and organic hydroperoxides to water and alcohols, respectively. Plays a role in cell protection against oxidative stress by detoxifying peroxides. In Haemophilus influenzae (strain ATCC 51907 / DSM 11121 / KW20 / Rd), this protein is Thiol peroxidase.